A 378-amino-acid polypeptide reads, in one-letter code: UDP-4-amino-4-deoxy-L-arabinose--oxoglutarate aminotransferase (378 aa).

The residue at position 182 (lysine 182) is an N6-(pyridoxal phosphate)lysine.

It belongs to the DegT/DnrJ/EryC1 family. ArnB subfamily. In terms of assembly, homodimer. Requires pyridoxal 5'-phosphate as cofactor.

The enzyme catalyses UDP-4-amino-4-deoxy-beta-L-arabinose + 2-oxoglutarate = UDP-beta-L-threo-pentopyranos-4-ulose + L-glutamate. It participates in nucleotide-sugar biosynthesis; UDP-4-deoxy-4-formamido-beta-L-arabinose biosynthesis; UDP-4-deoxy-4-formamido-beta-L-arabinose from UDP-alpha-D-glucuronate: step 2/3. The protein operates within bacterial outer membrane biogenesis; lipopolysaccharide biosynthesis. In terms of biological role, catalyzes the conversion of UDP-4-keto-arabinose (UDP-Ara4O) to UDP-4-amino-4-deoxy-L-arabinose (UDP-L-Ara4N). The modified arabinose is attached to lipid A and is required for resistance to polymyxin and cationic antimicrobial peptides. The sequence is that of UDP-4-amino-4-deoxy-L-arabinose--oxoglutarate aminotransferase from Aeromonas hydrophila subsp. hydrophila (strain ATCC 7966 / DSM 30187 / BCRC 13018 / CCUG 14551 / JCM 1027 / KCTC 2358 / NCIMB 9240 / NCTC 8049).